A 387-amino-acid polypeptide reads, in one-letter code: F420-dependent formate dehydrogenase 1 subunit beta (387 aa).

4Fe-4S ferredoxin-type domains are found at residues 275-298 (TIEEWNRQWNKCIKCYGCRDVCPV) and 326-355 (VRMSHMAFSCVNCGQCEDVCPMEIPVARIF). [4Fe-4S] cluster contacts are provided by cysteine 286, cysteine 289, cysteine 292, cysteine 296, cysteine 335, cysteine 338, cysteine 341, and cysteine 345. Residues 366–387 (LGYRPGVDDEAPPALGGSCPTQ) form a disordered region.

Belongs to the FrhB family. As to quaternary structure, dimer of an alpha (FdhA1) and a beta (FdhB1) subunit. It depends on [4Fe-4S] cluster as a cofactor. The cofactor is FAD. Zn(2+) is required as a cofactor.

It carries out the reaction oxidized coenzyme F420-(gamma-L-Glu)(n) + formate + 2 H(+) = reduced coenzyme F420-(gamma-L-Glu)(n) + CO2. In terms of biological role, catalyzes the oxidation of formate to carbon dioxide, with coenzyme F420 as the electron acceptor. In vitro can also use methyl viologen as electron acceptor. This chain is F420-dependent formate dehydrogenase 1 subunit beta, found in Methanococcus maripaludis (strain DSM 14266 / JCM 13030 / NBRC 101832 / S2 / LL).